The sequence spans 428 residues: Adenylosuccinate synthetase (428 aa).

GTP is bound by residues glycine 12–lysine 18 and glycine 40–threonine 42. Aspartate 13 acts as the Proton acceptor in catalysis. Residues aspartate 13 and glycine 40 each contribute to the Mg(2+) site. IMP contacts are provided by residues aspartate 13 to lysine 16, asparagine 38 to histidine 41, threonine 128, arginine 142, glutamine 223, threonine 238, and arginine 302. Histidine 41 serves as the catalytic Proton donor. Residue valine 298–arginine 304 coordinates substrate. Residues arginine 304, lysine 330 to aspartate 332, and glycine 412 to glycine 414 contribute to the GTP site.

This sequence belongs to the adenylosuccinate synthetase family. As to quaternary structure, homodimer. Requires Mg(2+) as cofactor.

It is found in the cytoplasm. The catalysed reaction is IMP + L-aspartate + GTP = N(6)-(1,2-dicarboxyethyl)-AMP + GDP + phosphate + 2 H(+). It participates in purine metabolism; AMP biosynthesis via de novo pathway; AMP from IMP: step 1/2. Its function is as follows. Plays an important role in the de novo pathway of purine nucleotide biosynthesis. Catalyzes the first committed step in the biosynthesis of AMP from IMP. This is Adenylosuccinate synthetase from Bifidobacterium animalis subsp. lactis (strain AD011).